The primary structure comprises 279 residues: 4-hydroxy-3-methylbut-2-enyl diphosphate reductase (279 aa).

Cys-12 contacts [4Fe-4S] cluster. His-41 and His-74 together coordinate (2E)-4-hydroxy-3-methylbut-2-enyl diphosphate. Dimethylallyl diphosphate-binding residues include His-41 and His-74. Isopentenyl diphosphate is bound by residues His-41 and His-74. Cys-96 is a binding site for [4Fe-4S] cluster. His-124 provides a ligand contact to (2E)-4-hydroxy-3-methylbut-2-enyl diphosphate. A dimethylallyl diphosphate-binding site is contributed by His-124. An isopentenyl diphosphate-binding site is contributed by His-124. The active-site Proton donor is the Glu-126. Thr-164 provides a ligand contact to (2E)-4-hydroxy-3-methylbut-2-enyl diphosphate. Cys-192 contributes to the [4Fe-4S] cluster binding site. Residues Ser-220, Ser-221, Asn-222, and Ser-263 each contribute to the (2E)-4-hydroxy-3-methylbut-2-enyl diphosphate site. Residues Ser-220, Ser-221, Asn-222, and Ser-263 each contribute to the dimethylallyl diphosphate site. Isopentenyl diphosphate contacts are provided by Ser-220, Ser-221, Asn-222, and Ser-263.

It belongs to the IspH family. The cofactor is [4Fe-4S] cluster.

It carries out the reaction isopentenyl diphosphate + 2 oxidized [2Fe-2S]-[ferredoxin] + H2O = (2E)-4-hydroxy-3-methylbut-2-enyl diphosphate + 2 reduced [2Fe-2S]-[ferredoxin] + 2 H(+). The catalysed reaction is dimethylallyl diphosphate + 2 oxidized [2Fe-2S]-[ferredoxin] + H2O = (2E)-4-hydroxy-3-methylbut-2-enyl diphosphate + 2 reduced [2Fe-2S]-[ferredoxin] + 2 H(+). It participates in isoprenoid biosynthesis; dimethylallyl diphosphate biosynthesis; dimethylallyl diphosphate from (2E)-4-hydroxy-3-methylbutenyl diphosphate: step 1/1. It functions in the pathway isoprenoid biosynthesis; isopentenyl diphosphate biosynthesis via DXP pathway; isopentenyl diphosphate from 1-deoxy-D-xylulose 5-phosphate: step 6/6. Functionally, catalyzes the conversion of 1-hydroxy-2-methyl-2-(E)-butenyl 4-diphosphate (HMBPP) into a mixture of isopentenyl diphosphate (IPP) and dimethylallyl diphosphate (DMAPP). Acts in the terminal step of the DOXP/MEP pathway for isoprenoid precursor biosynthesis. This is 4-hydroxy-3-methylbut-2-enyl diphosphate reductase from Clostridioides difficile (strain 630) (Peptoclostridium difficile).